Reading from the N-terminus, the 320-residue chain is Annexin A5 (320 aa).

Residue alanine 2 is modified to N-acetylalanine. 4 Annexin repeats span residues 15–86, 87–158, 170–242, and 246–317; these read FDER…ALMK, PSRL…VLLQ, AQVE…AVVK, and SIPA…LLCG. A Glycyl lysine isopeptide (Lys-Gly) (interchain with G-Cter in SUMO1); alternate cross-link involves residue lysine 29. A Glycyl lysine isopeptide (Lys-Gly) (interchain with G-Cter in SUMO2); alternate cross-link involves residue lysine 29. A Phosphoserine modification is found at serine 37. Lysine 70, lysine 76, lysine 79, lysine 97, and lysine 101 each carry N6-acetyllysine. Lysine 290 carries the post-translational modification N6-succinyllysine. The [IL]-x-C-x-x-[DE] motif signature appears at 314–319; it reads LLCGED.

This sequence belongs to the annexin family. Monomer. Binds ATRX and EIF5B. Interacts with hepatitis B virus (HBV). In terms of processing, S-nitrosylation is induced by interferon-gamma and oxidatively-modified low-densitity lipoprotein (LDL(ox)) possibly implicating the iNOS-S100A8/9 transnitrosylase complex.

Its function is as follows. This protein is an anticoagulant protein that acts as an indirect inhibitor of the thromboplastin-specific complex, which is involved in the blood coagulation cascade. This is Annexin A5 (ANXA5) from Homo sapiens (Human).